Reading from the N-terminus, the 225-residue chain is Ribose-5-phosphate isomerase A (225 aa).

Substrate contacts are provided by residues 26–29, 82–85, and 95–98; these read TGST, DGAD, and KGGG. The active-site Proton acceptor is the E104. A substrate-binding site is contributed by K122.

Belongs to the ribose 5-phosphate isomerase family. In terms of assembly, homodimer.

The enzyme catalyses aldehydo-D-ribose 5-phosphate = D-ribulose 5-phosphate. It functions in the pathway carbohydrate degradation; pentose phosphate pathway; D-ribose 5-phosphate from D-ribulose 5-phosphate (non-oxidative stage): step 1/1. Catalyzes the reversible conversion of ribose-5-phosphate to ribulose 5-phosphate. This Streptococcus gordonii (strain Challis / ATCC 35105 / BCRC 15272 / CH1 / DL1 / V288) protein is Ribose-5-phosphate isomerase A.